Here is a 129-residue protein sequence, read N- to C-terminus: Glycine cleavage system H protein (129 aa).

A Lipoyl-binding domain is found at 24–106; the sequence is TYTVGITEHA…YAGGWIFKIK (83 aa). N6-lipoyllysine is present on lysine 65.

It belongs to the GcvH family. As to quaternary structure, the glycine cleavage system is composed of four proteins: P, T, L and H. Requires (R)-lipoate as cofactor.

In terms of biological role, the glycine cleavage system catalyzes the degradation of glycine. The H protein shuttles the methylamine group of glycine from the P protein to the T protein. The polypeptide is Glycine cleavage system H protein (Escherichia coli O45:K1 (strain S88 / ExPEC)).